The primary structure comprises 352 residues: Ribosome biogenesis protein BRX1 homolog (352 aa).

The segment at 1-55 (MGKFSKIKKVQEEESAHQKMEWEAAGAKDSSSDDSSDESDNDDQPKQATEETRKR) is disordered. The segment covering 9–22 (KVQEEESAHQKMEW) has biased composition (basic and acidic residues). Acidic residues predominate over residues 32 to 42 (SDDSSDESDND). Residues 43-55 (DQPKQATEETRKR) are compositionally biased toward basic and acidic residues. Residues 63 to 253 (ERVLVLCSRG…MVRLFAGSFE (191 aa)) enclose the Brix domain.

The protein belongs to the BRX1 family.

The protein localises to the nucleus. It localises to the nucleolus. Its function is as follows. Required for biogenesis of the 60S ribosomal subunit. In Caenorhabditis elegans, this protein is Ribosome biogenesis protein BRX1 homolog.